Reading from the N-terminus, the 242-residue chain is MSEPANERTGFHRVLLKLGGEMFGGGKVGLDPDVVTKVAEQIAEVVRSGVQVAVVIGGGNFFRGAELQQRGLDRARSDYMGMLGTVMNCLALQDFLEKEGIDSRVQTAITMGQVAEPYIPLRAQRHLEKGRVVIFGAGMGMPYFSTDTTAAQRALEIGAEVVLMAKAVDGVFTADPNLDPTATMYAQITHREVIEQGLKVADATAFSLCMDNEMPIMVFNLLTEGNIARAVSGEKIGTLVKS.

Residue 17 to 20 (KLGG) participates in ATP binding. Gly58 is a binding site for UMP. Positions 59 and 63 each coordinate ATP. Residues Asp78 and 139–146 (MGMPYFST) each bind UMP. ATP contacts are provided by Phe172 and Asp175.

It belongs to the UMP kinase family. In terms of assembly, homohexamer.

It is found in the cytoplasm. It catalyses the reaction UMP + ATP = UDP + ADP. It participates in pyrimidine metabolism; CTP biosynthesis via de novo pathway; UDP from UMP (UMPK route): step 1/1. Its activity is regulated as follows. Inhibited by UTP. Functionally, catalyzes the reversible phosphorylation of UMP to UDP. The chain is Uridylate kinase from Rhodococcus jostii (strain RHA1).